We begin with the raw amino-acid sequence, 267 residues long: MAEPVQEELSVLAAIFCRPHEWEVLSRSETDGTVFRIHTKAEGFMDVDIPLELVFHLPVNYPSCLPGISINSEQLTRAQCVTVKENLLEQAESLLSEPMVHELVLWIQQNLRHILSQPETGSGSEKCTFSTSTTMDDGLWITLLHLDHMRAKTKYVKIVEKWASDLRLTGRLMFMGKIILILLQGDRNNLKEYLILQKTSKVDVDSSGKKCKEKMISVLFETKVQTEHKRFLAFEVKEYSALDELQKEFETAGLKKLFSEFVLALVK.

The RWD domain maps to 7–114 (EELSVLAAIF…LWIQQNLRHI (108 aa)). Interaction with UBE2I/UBC9 regions lie at residues 13 to 15 (AAI) and 100 to 102 (VHE).

Isoform 1 and isoform 2 interact with UBE2I/UBC9. Isoform 1 shows a greater interaction with NFKBIA and HIF1A as compared to isoform 2. Isoform 2 interacts with NCOA2 and NR3C1. Isoform 1 and isoform 2 are expressed in glioma tumors (at protein level). Expressed in a wide number of tissues with highest expression in cerebellum, pituitary, heart, kidney, liver, stomach, pancreas, prostate and spleen. Low levels in thalamus, spinal cord, esophagus, thymus, lung and peripheral blood leukocytes. A higher level expression seen in pituitary tumors as compared to the pituitary gland.

The protein resides in the nucleus. Its subcellular location is the cytoplasm. Functionally, enhancer of SUMO conjugation. Via its interaction with UBE2I/UBC9, increases SUMO conjugation to proteins by promoting the binding of E1 and E2 enzymes, thioester linkage between SUMO and UBE2I/UBC9 and transfer of SUMO to specific target proteins which include HIF1A, PIAS, NFKBIA, NR3C1 and TOP1. Isoform 1 and isoform 2 positively regulate the NF-kappa-B signaling pathway by enhancing the sumoylation of NF-kappa-B inhibitor alpha (NFKBIA), promoting its stabilization which consequently leads to an increased inhibition of NF-kappa-B transcriptional activity. Isoform 1 and isoform 2 negatively regulate the hypoxia-inducible factor-1 alpha (HIF1A) signaling pathway by increasing the sumoylation of HIF1A, promoting its stabilization, transcriptional activity and the expression of its target gene VEGFA during hypoxia. Isoform 2 promotes the sumoylation and transcriptional activity of the glucocorticoid receptor NR3C1 and enhances the interaction of SUMO1 and NR3C1 with UBE2I/UBC9. Has no effect on ubiquitination. In Homo sapiens (Human), this protein is RWD domain-containing protein 3 (RWDD3).